Reading from the N-terminus, the 302-residue chain is Paired immunoglobulin-like type 2 receptor alpha (302 aa).

The signal sequence occupies residues 1 to 31 (MALLISLPGGTPAMAQILLLLSSACLHAGNS). Over 32–198 (ERSNRKNGFG…GGLDLQTTVG (167 aa)) the chain is Extracellular. Residues N90 and N107 are each glycosylated (N-linked (GlcNAc...) asparagine). A helical transmembrane segment spans residues 199 to 219 (LATAAAVFLVGVLGLIVFLWW). Residues 220–302 (KRRRQGQKTK…ETVYSIVKAK (83 aa)) are Cytoplasmic-facing. The segment covering 228 to 248 (TKAEIPAREPLETSEKHESVG) has biased composition (basic and acidic residues). The segment at 228–293 (TKAEIPAREP…LPVHGNPQEE (66 aa)) is disordered. 2 short sequence motifs (ITIM motif) span residues 265–270 (IVYASI) and 294–299 (TVYSIV). Polar residues predominate over residues 270–280 (ISLSSPTSPGT).

In terms of assembly, interacts with CD99. In terms of processing, phosphorylated on tyrosine residues.

The protein localises to the membrane. Functionally, paired receptors consist of highly related activating and inhibitory receptors and are widely involved in the regulation of the immune system. Receptor for CD99 and PIANP. In Mus musculus (Mouse), this protein is Paired immunoglobulin-like type 2 receptor alpha (Pilra).